We begin with the raw amino-acid sequence, 189 residues long: Phosphoheptose isomerase (189 aa).

The region spanning 34-189 (LVDALGNGKK…CDLLEKRLFG (156 aa)) is the SIS domain. 49–51 (NGG) provides a ligand contact to substrate. Residues His58 and Glu62 each coordinate Zn(2+). Substrate contacts are provided by residues Glu62, 91 to 92 (ND), 117 to 119 (STS), Ser122, and Gln169. Zn(2+) is bound by residues Gln169 and His177.

Belongs to the SIS family. GmhA subfamily. As to quaternary structure, homotetramer. It depends on Zn(2+) as a cofactor.

The protein localises to the cytoplasm. It catalyses the reaction 2 D-sedoheptulose 7-phosphate = D-glycero-alpha-D-manno-heptose 7-phosphate + D-glycero-beta-D-manno-heptose 7-phosphate. It participates in carbohydrate biosynthesis; D-glycero-D-manno-heptose 7-phosphate biosynthesis; D-glycero-alpha-D-manno-heptose 7-phosphate and D-glycero-beta-D-manno-heptose 7-phosphate from sedoheptulose 7-phosphate: step 1/1. Its function is as follows. Catalyzes the isomerization of sedoheptulose 7-phosphate in D-glycero-D-manno-heptose 7-phosphate. The polypeptide is Phosphoheptose isomerase (Geotalea uraniireducens (strain Rf4) (Geobacter uraniireducens)).